A 665-amino-acid polypeptide reads, in one-letter code: Methionine--tRNA ligase (665 aa).

The 'HIGH' region motif lies at 12–22 (YYPSGKLHIGS). The 'KMSKS' region motif lies at 308–312 (KMSKS). K311 lines the ATP pocket. In terms of domain architecture, tRNA-binding spans 562–665 (TFDAVEIRVA…SSVPNGSIIG (104 aa)).

This sequence belongs to the class-I aminoacyl-tRNA synthetase family. MetG type 2B subfamily. Homodimer.

The protein localises to the cytoplasm. The enzyme catalyses tRNA(Met) + L-methionine + ATP = L-methionyl-tRNA(Met) + AMP + diphosphate. Its function is as follows. Is required not only for elongation of protein synthesis but also for the initiation of all mRNA translation through initiator tRNA(fMet) aminoacylation. The protein is Methionine--tRNA ligase (metG) of Streptococcus pyogenes serotype M3 (strain SSI-1).